Reading from the N-terminus, the 509-residue chain is Maturase K (509 aa).

It belongs to the intron maturase 2 family. MatK subfamily.

The protein localises to the plastid. Its subcellular location is the chloroplast. In terms of biological role, usually encoded in the trnK tRNA gene intron. Probably assists in splicing its own and other chloroplast group II introns. The polypeptide is Maturase K (Nicotiana tomentosiformis (Tobacco)).